The primary structure comprises 577 residues: 2-succinyl-5-enolpyruvyl-6-hydroxy-3-cyclohexene-1-carboxylate synthase (577 aa).

It belongs to the TPP enzyme family. MenD subfamily. Homodimer. The cofactor is Mg(2+). Mn(2+) is required as a cofactor. It depends on thiamine diphosphate as a cofactor.

The enzyme catalyses isochorismate + 2-oxoglutarate + H(+) = 5-enolpyruvoyl-6-hydroxy-2-succinyl-cyclohex-3-ene-1-carboxylate + CO2. The protein operates within quinol/quinone metabolism; 1,4-dihydroxy-2-naphthoate biosynthesis; 1,4-dihydroxy-2-naphthoate from chorismate: step 2/7. Its pathway is quinol/quinone metabolism; menaquinone biosynthesis. Functionally, catalyzes the thiamine diphosphate-dependent decarboxylation of 2-oxoglutarate and the subsequent addition of the resulting succinic semialdehyde-thiamine pyrophosphate anion to isochorismate to yield 2-succinyl-5-enolpyruvyl-6-hydroxy-3-cyclohexene-1-carboxylate (SEPHCHC). This Geobacillus kaustophilus (strain HTA426) protein is 2-succinyl-5-enolpyruvyl-6-hydroxy-3-cyclohexene-1-carboxylate synthase.